The following is a 310-amino-acid chain: Ribonuclease Z (310 aa).

Zn(2+) is bound by residues His64, His66, Asp68, His69, His142, Asp213, and His271. Asp68 acts as the Proton acceptor in catalysis.

This sequence belongs to the RNase Z family. As to quaternary structure, homodimer. Requires Zn(2+) as cofactor.

The enzyme catalyses Endonucleolytic cleavage of RNA, removing extra 3' nucleotides from tRNA precursor, generating 3' termini of tRNAs. A 3'-hydroxy group is left at the tRNA terminus and a 5'-phosphoryl group is left at the trailer molecule.. Its function is as follows. Zinc phosphodiesterase, which displays some tRNA 3'-processing endonuclease activity. Probably involved in tRNA maturation, by removing a 3'-trailer from precursor tRNA. This is Ribonuclease Z from Treponema pallidum (strain Nichols).